Consider the following 81-residue polypeptide: RBAK downstream neighbor protein (81 aa).

The N-terminal stretch at 1-22 (MWPPLLLLLLLLPAAPVPTAKA) is a signal peptide.

The protein localises to the secreted. The polypeptide is RBAK downstream neighbor protein (RBAKDN) (Homo sapiens (Human)).